The sequence spans 297 residues: UDP-N-acetylenolpyruvoylglucosamine reductase (297 aa).

One can recognise an FAD-binding PCMH-type domain in the interval 26–191 (KSGGTADWLF…VAARFRGHPG (166 aa)). Arg-171 is an active-site residue. Residue Ser-220 is the Proton donor of the active site. Glu-290 is a catalytic residue.

Belongs to the MurB family. The cofactor is FAD.

The protein localises to the cytoplasm. It carries out the reaction UDP-N-acetyl-alpha-D-muramate + NADP(+) = UDP-N-acetyl-3-O-(1-carboxyvinyl)-alpha-D-glucosamine + NADPH + H(+). Its pathway is cell wall biogenesis; peptidoglycan biosynthesis. In terms of biological role, cell wall formation. This is UDP-N-acetylenolpyruvoylglucosamine reductase from Novosphingobium aromaticivorans (strain ATCC 700278 / DSM 12444 / CCUG 56034 / CIP 105152 / NBRC 16084 / F199).